A 229-amino-acid chain; its full sequence is Putative N-acetylmannosamine-6-phosphate 2-epimerase (229 aa).

It belongs to the NanE family.

The catalysed reaction is an N-acyl-D-glucosamine 6-phosphate = an N-acyl-D-mannosamine 6-phosphate. Its pathway is amino-sugar metabolism; N-acetylneuraminate degradation; D-fructose 6-phosphate from N-acetylneuraminate: step 3/5. Its function is as follows. Converts N-acetylmannosamine-6-phosphate (ManNAc-6-P) to N-acetylglucosamine-6-phosphate (GlcNAc-6-P). The chain is Putative N-acetylmannosamine-6-phosphate 2-epimerase from Pediococcus pentosaceus (strain ATCC 25745 / CCUG 21536 / LMG 10740 / 183-1w).